A 291-amino-acid chain; its full sequence is uncharacterized protein (291 aa).

NAD(+) is bound by residues 5–19 (AFIG…MAGH) and T97. The active site involves K172. K240 is an NAD(+) binding site.

This sequence belongs to the HIBADH-related family.

This is an uncharacterized protein from Shewanella frigidimarina (strain NCIMB 400).